Consider the following 189-residue polypeptide: Glycerol-3-phosphate acyltransferase (189 aa).

The next 5 membrane-spanning stretches (helical) occupy residues 1-21 (MVWL…AVLL), 50-70 (KLAI…VLVA), 72-92 (WLGL…IGHL), 111-131 (MLLG…LLTF), and 151-171 (LLAW…ALIV).

This sequence belongs to the PlsY family. As to quaternary structure, probably interacts with PlsX.

The protein resides in the cell inner membrane. It catalyses the reaction an acyl phosphate + sn-glycerol 3-phosphate = a 1-acyl-sn-glycero-3-phosphate + phosphate. The protein operates within lipid metabolism; phospholipid metabolism. Catalyzes the transfer of an acyl group from acyl-phosphate (acyl-PO(4)) to glycerol-3-phosphate (G3P) to form lysophosphatidic acid (LPA). This enzyme utilizes acyl-phosphate as fatty acyl donor, but not acyl-CoA or acyl-ACP. The polypeptide is Glycerol-3-phosphate acyltransferase (Pseudomonas paraeruginosa (strain DSM 24068 / PA7) (Pseudomonas aeruginosa (strain PA7))).